The following is a 512-amino-acid chain: ATP synthase subunit alpha (512 aa).

ATP is bound at residue 169 to 176 (GDRQTGKT).

The protein belongs to the ATPase alpha/beta chains family. As to quaternary structure, F-type ATPases have 2 components, CF(1) - the catalytic core - and CF(0) - the membrane proton channel. CF(1) has five subunits: alpha(3), beta(3), gamma(1), delta(1), epsilon(1). CF(0) has three main subunits: a(1), b(2) and c(9-12). The alpha and beta chains form an alternating ring which encloses part of the gamma chain. CF(1) is attached to CF(0) by a central stalk formed by the gamma and epsilon chains, while a peripheral stalk is formed by the delta and b chains.

The protein resides in the cell membrane. The catalysed reaction is ATP + H2O + 4 H(+)(in) = ADP + phosphate + 5 H(+)(out). In terms of biological role, produces ATP from ADP in the presence of a proton gradient across the membrane. The alpha chain is a regulatory subunit. This Buchnera aphidicola subsp. Acyrthosiphon pisum (strain 5A) protein is ATP synthase subunit alpha.